The chain runs to 69 residues: Metallothionein-like protein 3 (69 aa).

Belongs to the metallothionein superfamily. Type 15 family. Expressed in leaf mesophyll cells, root tips, and at low levels in anthers.

Its function is as follows. Metallothioneins have a high content of cysteine residues that bind various heavy metals. Functions as a metal chelator of copper (Cu) and zinc (Zn). Plays a role in Cu homeostasis, specifically in the remobilization of Cu from senescing leaves. The mobilization of Cu from internal sources is important for seed development. The polypeptide is Metallothionein-like protein 3 (Arabidopsis thaliana (Mouse-ear cress)).